A 69-amino-acid polypeptide reads, in one-letter code: DNA-directed RNA polymerase subunit omega (69 aa).

Belongs to the RNA polymerase subunit omega family. In terms of assembly, the RNAP catalytic core consists of 2 alpha, 1 beta, 1 beta' and 1 omega subunit. When a sigma factor is associated with the core the holoenzyme is formed, which can initiate transcription.

The enzyme catalyses RNA(n) + a ribonucleoside 5'-triphosphate = RNA(n+1) + diphosphate. Its function is as follows. Promotes RNA polymerase assembly. Latches the N- and C-terminal regions of the beta' subunit thereby facilitating its interaction with the beta and alpha subunits. The protein is DNA-directed RNA polymerase subunit omega of Hahella chejuensis (strain KCTC 2396).